A 239-amino-acid chain; its full sequence is Probable transcriptional regulator ycf27 (239 aa).

Residues 7–120 (KILVVDDEIS…ELEARIRSLL (114 aa)) enclose the Response regulatory domain. Asp-56 carries the 4-aspartylphosphate modification. Residues 76–94 (DIPIIMLTALGDVADRITG) constitute a DNA-binding region (H-T-H motif). A DNA-binding region (ompR/PhoB-type) is located at residues 135-236 (GENLQIGFLK…ARGIGYLFQN (102 aa)).

It localises to the plastid. It is found in the cyanelle. Functionally, probable promoter-specific protein mediating the interaction between DNA and RNA polymerase. The protein is Probable transcriptional regulator ycf27 (ycf27) of Cyanophora paradoxa.